A 356-amino-acid chain; its full sequence is Glycerol-1-phosphate dehydrogenase [NAD(P)+] (356 aa).

NAD(+)-binding positions include 103 to 107 and 125 to 128; these read GRSID and TAAS. Asp130 serves as a coordination point for substrate. Residue Ser134 coordinates NAD(+). Residue Asp177 participates in substrate binding. The Zn(2+) site is built by Asp177 and His257. His261 serves as a coordination point for substrate. A Zn(2+)-binding site is contributed by His273.

It belongs to the glycerol-1-phosphate dehydrogenase family. It depends on Zn(2+) as a cofactor.

It localises to the cytoplasm. It carries out the reaction sn-glycerol 1-phosphate + NAD(+) = dihydroxyacetone phosphate + NADH + H(+). It catalyses the reaction sn-glycerol 1-phosphate + NADP(+) = dihydroxyacetone phosphate + NADPH + H(+). The protein operates within membrane lipid metabolism; glycerophospholipid metabolism. Catalyzes the NAD(P)H-dependent reduction of dihydroxyacetonephosphate (DHAP or glycerone phosphate) to glycerol 1-phosphate (G1P). The G1P thus generated is used as the glycerophosphate backbone of phospholipids in the cellular membranes of Archaea. The polypeptide is Glycerol-1-phosphate dehydrogenase [NAD(P)+] (Methanosarcina barkeri (strain Fusaro / DSM 804)).